A 300-amino-acid chain; its full sequence is Hemagglutinin 1 (300 aa).

The chain crosses the membrane as a helical span at residues 200–221; the sequence is FIFATVVFIFLQAGRVPEIIAD.

It localises to the cell membrane. Its function is as follows. Induces agglutination of neuraminidase-treated erythrocytes. This Eikenella corrodens protein is Hemagglutinin 1 (hag1).